Reading from the N-terminus, the 425-residue chain is MADKEAAFDDAVEERVINEEYKIWKKNTPFLYDLVMTHALEWPSLTAQWLPDVTRPDGKDFSIHRLVLGTHTSDEQNHLVIASVQLPNDDAQFDASHYDSEKGEFGGFGSVSGKIEIEIKINHEGEVNRARYMPQNPCIIATKTPSSDVLVFDYTKHPSKPDPSGECNPDLRLRGHQKEGYGLSWNPNLSGNLLSASDDHTICLWDISAVPKEGKVVDAKTIFTGHTAVVEDVSWHLLHESLFGSVADDQKLMIWDTRSNNTSKPSHSVDAHTAEVNCLSFNPYSEFILATGSADKTVALWDLRNLKLKLHSFESHKDEIFQVQWSPHNETILASSGTDRRLNVWDLSKIGEEQSPEDAEDGPPELLFIHGGHTAKISDFSWNPNEPWVICSVSEDNIMQVWQMAENIYNDEDTEGGVDPEGQSS.

Position 2 is an N-acetylalanine (A2). WD repeat units follow at residues 32–125 (YDLV…NHEG), 126–175 (EVNR…RLRG), 176–223 (HQKE…KTIF), 225–270 (GHTA…HSVD), 271–314 (AHTA…HSFE), 315–371 (SHKD…FIHG), and 372–404 (GHTAKISDFSWNPNEPWVICSVSEDNIMQVWQM).

It belongs to the WD repeat RBAP46/RBAP48/MSI1 family. In terms of assembly, binds directly to histone H4, probably via helix 1 of the histone fold, a region that is not accessible when histone H4 is in chromatin. Forms a large corepressor complex that contains ncor1, sin3a and possibly sin3b, histone deacetylases hdac2, hdac1, rbbp4 and possibly rbbp7.

The protein resides in the nucleus. It localises to the chromosome. The protein localises to the telomere. Functionally, core histone-binding subunit that may target chromatin assembly factors, chromatin remodeling factors and histone deacetylases to their histone substrates in a manner that is regulated by nucleosomal DNA. Component of several complexes which regulate chromatin metabolism. The protein is Histone-binding protein RBBP4 (rbbp4) of Xenopus tropicalis (Western clawed frog).